Here is a 130-residue protein sequence, read N- to C-terminus: Ribonuclease VapC22 (130 aa).

A PINc domain is found at 4-119 (VLLDSHVAYW…RLVTKDRRLR (116 aa)). Mg(2+) is bound by residues D7 and D97.

It belongs to the PINc/VapC protein family. Mg(2+) serves as cofactor.

The protein localises to the secreted. Functionally, toxic component of a type II toxin-antitoxin (TA) system. An RNase. Upon expression in M.smegmatis inhibits translation and colony formation. Its toxic effect on colony formation is neutralized by coexpression with cognate antitoxin VapB22; the effect on translation has not been tested but is probably neutralized also. In Mycobacterium tuberculosis (strain ATCC 25618 / H37Rv), this protein is Ribonuclease VapC22.